The following is a 186-amino-acid chain: Negative modulator of initiation of replication (186 aa).

The protein belongs to the SeqA family. In terms of assembly, homodimer. Polymerizes to form helical filaments.

It localises to the cytoplasm. Negative regulator of replication initiation, which contributes to regulation of DNA replication and ensures that replication initiation occurs exactly once per chromosome per cell cycle. Binds to pairs of hemimethylated GATC sequences in the oriC region, thus preventing assembly of replication proteins and re-initiation at newly replicated origins. Repression is relieved when the region becomes fully methylated. This Glaesserella parasuis serovar 5 (strain SH0165) (Haemophilus parasuis) protein is Negative modulator of initiation of replication.